A 2347-amino-acid polypeptide reads, in one-letter code: MSEYYFYYKRREKMKKRKRRNFKRFIAAFLVLALIISLVPADVLAKTTEEENGNRIVADDPEETLQKEQTEEAVPFDPKDINKEGEITSERTENTKLYYEGDGVYKQEVYLDPIHTKETPDADWEDISPELKESTSKQVETENAILNSDFQKQMKNGLYATFEHNDHKVTYSLVEAKAPNKTSLTPKDTSADYKTDSNEIVYPDVFPNIDLQTFTFNENIKEDLVLHQYDGYNTFTFQLKTDLQAKEQEDGSIDFSDEKGKVVFSVPKPFMTDSKLDELSGEVERSDKVSYKLEKNEEGYLLHLTADENWLKDPERVYPVSIDPSTSLSVSSDTFVMSAYPTTNYSASSQKWDANLKAYVLKTGYYDKTTGTNYAFMKFNNLKPIQNMTVTKATLKTYVAHSYYGTKATGLWLDTVNSNYDNAKVTWNTKPASKNIGKADVHKGQWASYDVTAAVKSWNSGGANYGFKLHTNGNGKEYWKKLISSANSANKPYIEVTYTIPKGNTPTIKAYHNGDSTGYFDISWKKVEGAKGYKVWIYNGKEYQAISAGNVTSWSTKGKKIWPTSAEIASKRYKLHLDGKDGAELALDPSPVYKNSGGSYATSKNYWIGVSAIFDQGEGAMSAPAKPVIPNVGKAQAPSAKGYNNGNATGYFDLSWKAVSGATGYKVQVFNGKGFETLDLGNQTSWTTKGKKIWPTSAEIKAGKYALHLKDGSGAELPINPGPTYKNAGGDGAKKNYSFKIIAYNKDGEAIASPAANPALPDIARPKNLTGYLYTNTKSSQTGYVNLIWEKVQNAKGYKVNIYNGKEYQSFDVGDADHWTTQNKNIWPTSEEIKAGSYKLHTDGKGGELALDPSPVYNNANGNYKGKKNYSFTLVAYDANGETIPTAPFNPTFHEGAEFLGTEEYWSIIDIPSGQLNGATGNVIVNEEDLSIDGRGPGLGLSRTYNSLDSSDHLFGQGWYADAETSVISTDGGAMYIDEDATTHRFTKKADGTYQPPTGVYLELTETADQFILKTKDQTNAYFNKKGGKLQKVVDGHNNATVYTYNDKNQLTAITDASGRKLTFTYDENGHVTSITGPKNKKVTYSYENDLLKKVTDTDGTVTSYDYDGEGRLVKQYSANSTEAKPVFTEYQYSGHRLEKAINAKKETYVYSYDADKKTLLMTQPNGRKVQYGYNEAGNPIQVIDDAEGLKITTNTKYEGNNVVEDVDPNDVGTGKATESYQYDKDGNVTSVKDAYGTETYEYNKNNDVTKMKDTEGNVTDIAYDGLDAVSETDQSGKSSSAAVYDKYGNQIQSSKDLSASTNILKDGSFEAQKSGWNLTASKDSGKISIITDKSGVLSGSKALEILSQSTSAGTDHGFSSATQTVELEPNTTYTLSGKIKTDLAKTRAYFNIDLRDKDQKRIQWIHNEYSALAGKNDWTKRQITFTTPANAGKAVVYMEVDHNDKDGKGKAWFDEVQLEKGEVSSSYNPVQNSSFTSATENWNVSGASVDSEEGFNDDVSLKAARTSASQAGSVTKQTVVLGQSANDKPVYLTLTGMSKASSVKFTDEKDYSLQANVTYADGSTGVYNAKFPSGTQEWNRAAVVIPKTKPINKVDISILFQKSATGTVWFDDIRLIEGSLLTKSTYDSNGNYVTKEEDELGYATSTDYDETGKKTAETDAKGEKTTYTYDQADQLTNMTLSNGTSILHSYDKEGNEVSKTIRAGADQTYKYEYDVMGKLVKTTDPLGNVLASEYDANSNLTKTISPNGNEVSLSYDGTDRVKSKSYNGTEKYNFTYDKNGNETSVVNKEQNTTKKRTFDNKNRLTELTDRGGSQTWTYPSDSDKLKTFSWTHGDQKGTNQFTYNKLDQMIEMKDSTSSYSFDYDENGNVQTFITGNGGGTSFSYDERNLVSSLHIGDKNGGSILTESYEYDANGNRTTINSSASGKVKYEYGKLNQLVKETHEDGTVIEYTYDGFGNRKTVTTVKDGSSKTVNASFNIMNQLTKVNDESISYDKNGNRTSDGKFTYTWDAEDNLTAVTKKGEDKPFATYKYDEKGNRIQKTVNGKVTNYFYDGDSLNVLYETDADNNVTKSYTYGDSGQLLSYTENGKKYFYHYNAHGDVIAISDSTGKTVAKYQYDAWGNPTKTEASDEVKDNRYRYAGYQYDEETGLYYLMARYYEPRNGVFLSLDPDPGSDGDSLDQNGYTYGNNNPVMNVDPDGHWVWFVVNAGFAVYDGYKAYKSGKGWKGVAVAAASGFVGGGKLKLTKKIGKWATSRHWYKGTFKTKRKSLDYHHNKHIVRNGKSYSKKRYTKVARAFYRSNKHLREKVILATGKKGYRIKNGKRTGYYTRSGKVVTFVNNKWKKKKKR.

Residues 1–45 (MSEYYFYYKRREKMKKRKRRNFKRFIAAFLVLALIISLVPADVLA) form the signal peptide. Residues 50–72 (EENGNRIVADDPEETLQKEQTEE) are disordered. YD repeat units follow at residues 1045–1078 (YNDKNQLTAITDASGRKLTFTYDENGHVTSITGP), 1088–1116 (ENDLLKKVTDTDGTVTSYDYDGEGRLVKQ), 1649–1684 (YDETGKKTAETDAKGEKTTYTYDQADQLTNMTLSNG), 1691–1729 (YDKEGNEVSKTIRAGADQTYKYEYDVMGKLVKTTDPLGN), and 2095–2126 (YNAHGDVIAISDSTGKTVAKYQYDAWGNPTKT).

Belongs to the RHS/WapA nuclease family.

The protein resides in the secreted. It is found in the cell wall. Functionally, toxic component of a toxin-immunity protein module, which functions as a cellular contact-dependent growth inhibition (CDI) system. A site-specific tRNA(Glu) nuclease, the C-terminus (residues 2214-2346) probably removes 2 or 4 nucleotides from the 3' end of tRNA(Glu) but not tRNA2(Arg) or tRNA3(Ser) (upon expression in E.coli), possibly endonucleolytically. The nuclease activity is neutralized by expression of the cognate immunity protein WapI from the same strain, but not its homolog from 2 other B.subtilis strains. The C-terminus cannot be expressed on its own in E.coli, however it can be cloned in the presence of its cognate immunity protein gene wapI. Cell contact is probably necessary for growth inhibition. In Bacillus subtilis subsp. natto (strain BEST195), this protein is tRNA(Glu)-specific nuclease WapA (wapA).